A 1152-amino-acid polypeptide reads, in one-letter code: P3N-PIPO polyprotein (1152 aa).

Residues 292–437 (VMNQQTLTAL…HTLTHRMVQY (146 aa)) enclose the Peptidase S30 domain. Active-site for P1 proteinase activity residues include His345, Asp354, and Ser388. The Involved in interaction with stylet and aphid transmission signature appears at 489–492 (KITC). The Involved in virions binding and aphid transmission signature appears at 747-749 (PTK). In terms of domain architecture, Peptidase C6 spans 773-895 (MFVAKDGYCY…ESEMQHYRVG (123 aa)). Active-site for helper component proteinase activity residues include Cys781 and His854.

This sequence belongs to the potyviridae P3N-PIPO polyprotein family. In terms of assembly, interacts (via PIPO domain) with host PCaP1 protein; this interaction may help to anchor the movement complex to the plasma membrane from which the complex could move to the plasmodesmata. Potyviral RNA is expressed as two polyproteins which undergo post-translational proteolytic processing. Genome polyprotein is processed by NIa-pro, P1 and HC-pro proteinases resulting in the production of at least ten individual proteins. P3N-PIPO is cleaved by P1 and HC-pro proteinases resulting in the production of three individual proteins. The P1 proteinase and the HC-pro cleave only their respective C-termini autocatalytically.

Its subcellular location is the host cell junction. It localises to the host plasmodesma. The enzyme catalyses Hydrolyzes a Gly-|-Gly bond at its own C-terminus, commonly in the sequence -Tyr-Xaa-Val-Gly-|-Gly, in the processing of the potyviral polyprotein.. Required for aphid transmission and also has proteolytic activity. Only cleaves a Gly-Gly dipeptide at its own C-terminus. Interacts with virions and aphid stylets. Acts as a suppressor of RNA-mediated gene silencing, also known as post-transcriptional gene silencing (PTGS), a mechanism of plant viral defense that limits the accumulation of viral RNAs. May have RNA-binding activity. Functionally, allows efficient cell to cell propagation, by bypassing the host cell wall barrier. Transports viral genome to neighboring plant cells directly through plasmosdesmata, without any budding. The sequence is that of P3N-PIPO polyprotein from Carthamus tinctorius (Safflower).